The chain runs to 118 residues: Turripeptide NCR-01 (118 aa).

A signal peptide spans 1–16 (MLRLILAVALVAACLA). The tract at residues 63 to 118 (QGFQGFLPQPHQKRDSYQHGGYQHQQSFDNFQGSGGMNNDNSDDSFALRNFNNDGY) is disordered. A compositionally biased stretch (polar residues) spans 85-102 (QHQQSFDNFQGSGGMNND).

Expressed by the venom duct.

The protein resides in the secreted. The chain is Turripeptide NCR-01 from Gemmula speciosa (Splendid gem-turris).